Consider the following 443-residue polypeptide: UDP-glucuronic acid decarboxylase 4 (443 aa).

Alanine 2 is modified (N-acetylalanine). Residues 2–43 (ASELTNRRHEIEQPEAESYYPKPIKPWFVAIRPIRYMLREQR) are Cytoplasmic-facing. Residues 44–64 (LVFVLVGIAIATLGFTIFSKS) traverse the membrane as a helical; Signal-anchor for type II membrane protein segment. Topologically, residues 65–443 (SNHQPIPYDV…DSSTTSSSTE (379 aa)) are lumenal. 151–176 (DNFFTGRKENVMHHFNNPNFEMIRHD) is an NAD(+) binding site. Arginine 260 contributes to the substrate binding site. Tyrosine 263 serves as the catalytic Proton acceptor. Residue 263 to 267 (YDEGK) participates in NAD(+) binding. Substrate is bound at residue asparagine 292. Residue arginine 304 coordinates NAD(+). Residues 305–309 (VVSNF), 322–329 (YGDGKQTR), and 389–393 (DPHKR) contribute to the substrate site.

This sequence belongs to the NAD(P)-dependent epimerase/dehydratase family. UDP-glucuronic acid decarboxylase subfamily. NAD(+) serves as cofactor.

The protein resides in the golgi apparatus. Its subcellular location is the golgi stack membrane. The catalysed reaction is UDP-alpha-D-glucuronate + H(+) = UDP-alpha-D-xylose + CO2. The protein operates within nucleotide-sugar biosynthesis; UDP-alpha-D-xylose biosynthesis; UDP-alpha-D-xylose from UDP-alpha-D-glucuronate: step 1/1. Catalyzes the NAD-dependent decarboxylation of UDP-glucuronic acid to UDP-xylose. Necessary for the biosynthesis of the core tetrasaccharide in glycosaminoglycan biosynthesis. The sequence is that of UDP-glucuronic acid decarboxylase 4 (UXS4) from Arabidopsis thaliana (Mouse-ear cress).